The chain runs to 162 residues: NADH-quinone oxidoreductase subunit I (162 aa).

4Fe-4S ferredoxin-type domains are found at residues 54–83 and 93–122; these read RRYE…IESE and TRYD…ETQI. Positions 63, 66, 69, 73, 102, 105, 108, and 112 each coordinate [4Fe-4S] cluster.

Belongs to the complex I 23 kDa subunit family. In terms of assembly, NDH-1 is composed of 14 different subunits. Subunits NuoA, H, J, K, L, M, N constitute the membrane sector of the complex. Requires [4Fe-4S] cluster as cofactor.

It is found in the cell inner membrane. It catalyses the reaction a quinone + NADH + 5 H(+)(in) = a quinol + NAD(+) + 4 H(+)(out). Its function is as follows. NDH-1 shuttles electrons from NADH, via FMN and iron-sulfur (Fe-S) centers, to quinones in the respiratory chain. The immediate electron acceptor for the enzyme in this species is believed to be ubiquinone. Couples the redox reaction to proton translocation (for every two electrons transferred, four hydrogen ions are translocated across the cytoplasmic membrane), and thus conserves the redox energy in a proton gradient. The protein is NADH-quinone oxidoreductase subunit I of Burkholderia cenocepacia (strain HI2424).